The chain runs to 137 residues: Large ribosomal subunit protein uL16 (137 aa).

Belongs to the universal ribosomal protein uL16 family. Part of the 50S ribosomal subunit.

Functionally, binds 23S rRNA and is also seen to make contacts with the A and possibly P site tRNAs. The protein is Large ribosomal subunit protein uL16 of Rhizobium johnstonii (strain DSM 114642 / LMG 32736 / 3841) (Rhizobium leguminosarum bv. viciae).